The sequence spans 24 residues: Tryptophanase operon leader peptide (24 aa).

The chain is Tryptophanase operon leader peptide (tnaL) from Escherichia coli O157:H7.